The primary structure comprises 324 residues: Delta-aminolevulinic acid dehydratase (324 aa).

The Zn(2+) site is built by Cys120, Cys122, and Cys130. Lys195 functions as the Schiff-base intermediate with substrate in the catalytic mechanism. 5-aminolevulinate is bound by residues Arg205 and Arg216. Mg(2+) is bound at residue Glu232. The Schiff-base intermediate with substrate role is filled by Lys247. The 5-aminolevulinate site is built by Ser273 and Tyr312.

Belongs to the ALAD family. In terms of assembly, homooctamer. The cofactor is Zn(2+).

It catalyses the reaction 2 5-aminolevulinate = porphobilinogen + 2 H2O + H(+). It participates in porphyrin-containing compound metabolism; protoporphyrin-IX biosynthesis; coproporphyrinogen-III from 5-aminolevulinate: step 1/4. Allosteric enzyme. Stimulated by magnesium ions. Its function is as follows. Catalyzes an early step in the biosynthesis of tetrapyrroles. Binds two molecules of 5-aminolevulinate per subunit, each at a distinct site, and catalyzes their condensation to form porphobilinogen. This is Delta-aminolevulinic acid dehydratase (hemB) from Escherichia coli (strain K12).